A 268-amino-acid chain; its full sequence is Ubiquinone/menaquinone biosynthesis C-methyltransferase UbiE (268 aa).

The interval 1–23 (MTDQHAFATEQVQLDPTLSPTTE) is disordered. Residues 10–23 (EQVQLDPTLSPTTE) show a composition bias toward polar residues. Residues Thr91, Asp112, 140-141 (NA), and Ser157 contribute to the S-adenosyl-L-methionine site.

The protein belongs to the class I-like SAM-binding methyltransferase superfamily. MenG/UbiE family.

It carries out the reaction a 2-demethylmenaquinol + S-adenosyl-L-methionine = a menaquinol + S-adenosyl-L-homocysteine + H(+). The enzyme catalyses a 2-methoxy-6-(all-trans-polyprenyl)benzene-1,4-diol + S-adenosyl-L-methionine = a 5-methoxy-2-methyl-3-(all-trans-polyprenyl)benzene-1,4-diol + S-adenosyl-L-homocysteine + H(+). The protein operates within quinol/quinone metabolism; menaquinone biosynthesis; menaquinol from 1,4-dihydroxy-2-naphthoate: step 2/2. It participates in cofactor biosynthesis; ubiquinone biosynthesis. Its function is as follows. Methyltransferase required for the conversion of demethylmenaquinol (DMKH2) to menaquinol (MKH2) and the conversion of 2-polyprenyl-6-methoxy-1,4-benzoquinol (DDMQH2) to 2-polyprenyl-3-methyl-6-methoxy-1,4-benzoquinol (DMQH2). The polypeptide is Ubiquinone/menaquinone biosynthesis C-methyltransferase UbiE (Pasteurella multocida (strain Pm70)).